The primary structure comprises 468 residues: ATP synthase subunit beta (468 aa).

150 to 157 (GGAGVGKT) contributes to the ATP binding site.

Belongs to the ATPase alpha/beta chains family. As to quaternary structure, F-type ATPases have 2 components, CF(1) - the catalytic core - and CF(0) - the membrane proton channel. CF(1) has five subunits: alpha(3), beta(3), gamma(1), delta(1), epsilon(1). CF(0) has three main subunits: a(1), b(2) and c(9-12). The alpha and beta chains form an alternating ring which encloses part of the gamma chain. CF(1) is attached to CF(0) by a central stalk formed by the gamma and epsilon chains, while a peripheral stalk is formed by the delta and b chains.

The protein resides in the cell inner membrane. It carries out the reaction ATP + H2O + 4 H(+)(in) = ADP + phosphate + 5 H(+)(out). In terms of biological role, produces ATP from ADP in the presence of a proton gradient across the membrane. The catalytic sites are hosted primarily by the beta subunits. This chain is ATP synthase subunit beta, found in Acidovorax ebreus (strain TPSY) (Diaphorobacter sp. (strain TPSY)).